A 164-amino-acid chain; its full sequence is Phosphopantetheine adenylyltransferase (164 aa).

Position 10 (Ser10) interacts with substrate. ATP-binding positions include 10–11 (SF) and His18. Residues Lys42, Met74, and Arg88 each coordinate substrate. Residues 89 to 91 (GLR), Glu99, and 124 to 130 (YFFVSAR) each bind ATP.

Belongs to the bacterial CoaD family. As to quaternary structure, homohexamer. Requires Mg(2+) as cofactor.

The protein resides in the cytoplasm. The enzyme catalyses (R)-4'-phosphopantetheine + ATP + H(+) = 3'-dephospho-CoA + diphosphate. Its pathway is cofactor biosynthesis; coenzyme A biosynthesis; CoA from (R)-pantothenate: step 4/5. Its function is as follows. Reversibly transfers an adenylyl group from ATP to 4'-phosphopantetheine, yielding dephospho-CoA (dPCoA) and pyrophosphate. This is Phosphopantetheine adenylyltransferase from Anaeromyxobacter dehalogenans (strain 2CP-1 / ATCC BAA-258).